The chain runs to 486 residues: MQWEVVIGLETHTQLTTQTKIFSGSPTQFGAEPNTQTSPVDLALPGALPVMNRGAVERAIQFGLAIGATIAPHSVFARKNYFYPDLPKGYQISQMDLPIVQGGRVSFALEVDGKTEIRSVQLTRAHLEEDAGKSLHEDYQGMTGIDLNRAGTPLLEIVTEPDMRSAAEAVAYAKALHTLVTWLGICDGNMQEGSFRCDANVSVRPVGQKEYGTRCEIKNLNSFRFLEDAINYEVRRQIELIEDGGRVVQATRLYDPDKKETREMRSKEDAHDYRYFPDPDLPPLVVSAEWIARVQAAMPELPGAMRERFVRDYALSEYDAAVLTQSKGMANYFEAVVAAAGKEQAKPAANWLMGDVASTLNREDIEIAAAPVAAAQLALLLQRIADGTISNKIAKEVFGAMWEAKSDSAKLADELIESKGLKQISDSGALEKIVDDVLAANAKSVEEFRAGKEQAINALMGQAMKASKGKANPAQLTELLKKKLTA.

Belongs to the GatB/GatE family. GatB subfamily. In terms of assembly, heterotrimer of A, B and C subunits.

The catalysed reaction is L-glutamyl-tRNA(Gln) + L-glutamine + ATP + H2O = L-glutaminyl-tRNA(Gln) + L-glutamate + ADP + phosphate + H(+). It carries out the reaction L-aspartyl-tRNA(Asn) + L-glutamine + ATP + H2O = L-asparaginyl-tRNA(Asn) + L-glutamate + ADP + phosphate + 2 H(+). Allows the formation of correctly charged Asn-tRNA(Asn) or Gln-tRNA(Gln) through the transamidation of misacylated Asp-tRNA(Asn) or Glu-tRNA(Gln) in organisms which lack either or both of asparaginyl-tRNA or glutaminyl-tRNA synthetases. The reaction takes place in the presence of glutamine and ATP through an activated phospho-Asp-tRNA(Asn) or phospho-Glu-tRNA(Gln). The sequence is that of Aspartyl/glutamyl-tRNA(Asn/Gln) amidotransferase subunit B from Janthinobacterium sp. (strain Marseille) (Minibacterium massiliensis).